The chain runs to 179 residues: Large ribosomal subunit protein uL5 (179 aa).

It belongs to the universal ribosomal protein uL5 family. Part of the 50S ribosomal subunit; part of the 5S rRNA/L5/L18/L25 subcomplex. Contacts the 5S rRNA and the P site tRNA. Forms a bridge to the 30S subunit in the 70S ribosome.

Functionally, this is one of the proteins that bind and probably mediate the attachment of the 5S RNA into the large ribosomal subunit, where it forms part of the central protuberance. In the 70S ribosome it contacts protein S13 of the 30S subunit (bridge B1b), connecting the 2 subunits; this bridge is implicated in subunit movement. Contacts the P site tRNA; the 5S rRNA and some of its associated proteins might help stabilize positioning of ribosome-bound tRNAs. The polypeptide is Large ribosomal subunit protein uL5 (Azotobacter vinelandii (strain DJ / ATCC BAA-1303)).